Consider the following 30-residue polypeptide: Protein ScvA (30 aa).

The tract at residues 1–30 is disordered; that stretch reads MERQNVQQQRGKDQRPQRPGASNPRRPNQR.

In terms of biological role, might be involved in DNA-binding; the protein binds DNA in gel-shift assays and immunogold electron microscopy shows labelling of condensed chromatin. This chain is Protein ScvA (scvA), found in Coxiella burnetii (strain RSA 493 / Nine Mile phase I).